We begin with the raw amino-acid sequence, 539 residues long: Protein PNS1 (539 aa).

The segment at 1-38 (MPLNEKYERPPQPPPAYDPNHRPPSSSENSAAANVNDG) is disordered. Topologically, residues 1-81 (MPLNEKYERP…NDNKPRWNDW (81 aa)) are cytoplasmic. A compositionally biased stretch (low complexity) spans 25–36 (SSSENSAAANVN). The chain crosses the membrane as a helical span at residues 82-102 (PFTIFFLCTVGGFIAIAAITL). Residues 103-129 (RAWSQTYSSTGSGIYDGVNTGTLNTNA) are Extracellular-facing. Residues 130–150 (AILLVFVCIIALVFSVLGLTL) traverse the membrane as a helical segment. Topologically, residues 151–157 (CRIFPKQ) are cytoplasmic. A helical transmembrane segment spans residues 158–178 (FIYCGMVINLVASLGTAIMYM). Topologically, residues 179 to 182 (SLRY) are extracellular. A helical membrane pass occupies residues 183–203 (WSAGIVFLVFTFMTAWCYWGM). Residues 204 to 226 (RSRIPLSVAVLKVVVDAMKKCPQ) are Cytoplasmic-facing. A helical transmembrane segment spans residues 227–247 (IFFVSFVGALVASAFGFLFSA). Over 248-274 (VIVATYIKYDPNSSNGGCDVSGGSCSH) the chain is Extracellular. N-linked (GlcNAc...) asparagine glycosylation occurs at N259. The chain crosses the membrane as a helical span at residues 275–295 (SKLIGVLVVVFFCGYYISEVI). The Cytoplasmic segment spans residues 296 to 332 (RNVIHCVISGVFGSWYYMSKSDQGMPRWPAFGALKRA). Residues 333-353 (MTYSFGSICFGSLLVALIDLL) traverse the membrane as a helical segment. Residues 354 to 371 (RQILQMIRHDVTSSGGGQ) lie on the Extracellular side of the membrane. A helical membrane pass occupies residues 372 to 392 (IAIQILFMVFDWIIGFLKWLA). The Cytoplasmic portion of the chain corresponds to 393–436 (EYFNHYAYSFIALYGKPYLRAAKETWYMLREKGMDALINDNLIN). The helical transmembrane segment at 437–457 (IALGLFSMFASYMTALFTFLY) threads the bilayer. Residues 458–473 (LRFTSPQYNSNGAYNG) lie on the Extracellular side of the membrane. A helical membrane pass occupies residues 474 to 494 (ALMAFSFVIALQICNIATEAI). Residues 495-539 (RSGTATFFVALGNDPEVFHHSYPHRFDEIFRAYPDVLRKLSHQNV) are Cytoplasmic-facing.

This sequence belongs to the CTL (choline transporter-like) family.

It localises to the cell membrane. Probably involved in transport through the plasma membrane. The protein is Protein PNS1 (PNS1) of Saccharomyces cerevisiae (strain ATCC 204508 / S288c) (Baker's yeast).